Here is a 90-residue protein sequence, read N- to C-terminus: RNA-binding protein Hfq (90 aa).

Positions 10–70 (DGFLNLLRRE…LSTITPARPL (61 aa)) constitute a Sm domain.

It belongs to the Hfq family. In terms of assembly, homohexamer.

Functionally, RNA chaperone that binds small regulatory RNA (sRNAs) and mRNAs to facilitate mRNA translational regulation in response to envelope stress, environmental stress and changes in metabolite concentrations. Also binds with high specificity to tRNAs. The polypeptide is RNA-binding protein Hfq (Symbiobacterium thermophilum (strain DSM 24528 / JCM 14929 / IAM 14863 / T)).